Consider the following 156-residue polypeptide: MSDENNQPFFNIQRIYLKDMSLEQPNSPGIFLEQEMPSVEVEVDVKAERLAETVFEILVTGTVTAKVSDKVAFLIEAKQAGIFDIRNIPAEQIDPLVGIACPTILFPYLRSNIADAITRAGFPPIHLAEINFQALYEQRLAQMGGQDGAAQNGVTH.

It belongs to the SecB family. As to quaternary structure, homotetramer, a dimer of dimers. One homotetramer interacts with 1 SecA dimer.

The protein localises to the cytoplasm. In terms of biological role, one of the proteins required for the normal export of preproteins out of the cell cytoplasm. It is a molecular chaperone that binds to a subset of precursor proteins, maintaining them in a translocation-competent state. It also specifically binds to its receptor SecA. The sequence is that of Protein-export protein SecB from Paraburkholderia xenovorans (strain LB400).